A 64-amino-acid polypeptide reads, in one-letter code: uncharacterized protein (64 aa).

This is an uncharacterized protein from Bdellovibrio phage phiMH2K (Bacteriophage phiMH2K).